We begin with the raw amino-acid sequence, 94 residues long: Putative defensin-like protein 88 (94 aa).

A signal peptide spans 1-26; sequence MATQKFSYFLLVLLMVFALILPSIIS. Disulfide bonds link C32–C72, C38–C59, and C48–C71.

The protein belongs to the DEFL family.

The protein resides in the secreted. The chain is Putative defensin-like protein 88 from Arabidopsis thaliana (Mouse-ear cress).